Here is a 165-residue protein sequence, read N- to C-terminus: Transmembrane protein 128 (165 aa).

4 helical membrane passes run Asn-49 to Phe-69, Trp-81 to Val-101, Leu-119 to Trp-139, and Phe-144 to Leu-164.

It localises to the membrane. The sequence is that of Transmembrane protein 128 (TMEM128) from Bos taurus (Bovine).